A 350-amino-acid chain; its full sequence is Dihydroorotate dehydrogenase (quinone) (350 aa).

Residues 61 to 65 (AGLDK) and Thr85 each bind FMN. A substrate-binding site is contributed by Lys65. 110–114 (NRMGF) contributes to the substrate binding site. FMN is bound by residues Asn139 and Asn172. Residue Asn172 participates in substrate binding. Ser175 functions as the Nucleophile in the catalytic mechanism. Asn177 serves as a coordination point for substrate. Lys217 and Thr245 together coordinate FMN. Position 246–247 (246–247 (NT)) interacts with substrate. Residues Gly268, Gly297, and 318–319 (YS) contribute to the FMN site.

Belongs to the dihydroorotate dehydrogenase family. Type 2 subfamily. Monomer. It depends on FMN as a cofactor.

The protein resides in the cell membrane. The enzyme catalyses (S)-dihydroorotate + a quinone = orotate + a quinol. It participates in pyrimidine metabolism; UMP biosynthesis via de novo pathway; orotate from (S)-dihydroorotate (quinone route): step 1/1. Its function is as follows. Catalyzes the conversion of dihydroorotate to orotate with quinone as electron acceptor. The chain is Dihydroorotate dehydrogenase (quinone) from Flavobacterium lutescens.